The primary structure comprises 133 residues: Putative biopolymer transport protein ExbD-like 2 (133 aa).

The Cytoplasmic portion of the chain corresponds to 1 to 9; the sequence is MKKVESMNV. The helical transmembrane segment at 10 to 30 threads the bilayer; sequence VPFIDIMLVLLVIVLTTASFV. The Periplasmic portion of the chain corresponds to 31 to 133; the sequence is QTSKLPISIP…LVEDKKNQKN (103 aa).

It belongs to the ExbD/TolR family.

It localises to the cell inner membrane. The chain is Putative biopolymer transport protein ExbD-like 2 from Helicobacter pylori (strain J99 / ATCC 700824) (Campylobacter pylori J99).